The primary structure comprises 137 residues: Acidic phospholipase A2 CC-PLA2-1 (137 aa).

The signal sequence occupies residues 1-16; sequence MRTLWIVAVWLMGVEG. 7 disulfides stabilise this stretch: Cys-42-Cys-130, Cys-44-Cys-60, Cys-59-Cys-110, Cys-65-Cys-137, Cys-66-Cys-103, Cys-73-Cys-96, and Cys-90-Cys-101. Positions 43, 45, and 47 each coordinate Ca(2+). The active site involves His-63. Asp-64 is a Ca(2+) binding site. Asp-104 is a catalytic residue.

Belongs to the phospholipase A2 family. Group II subfamily. D49 sub-subfamily. Ca(2+) is required as a cofactor. In terms of processing, glycosylated (2.5%). As to expression, expressed by the venom gland.

It is found in the secreted. The catalysed reaction is a 1,2-diacyl-sn-glycero-3-phosphocholine + H2O = a 1-acyl-sn-glycero-3-phosphocholine + a fatty acid + H(+). Snake venom phospholipase A2 (PLA2) that inhibits blood coagulation and platelet aggregation induced by ADP and arachidonic acid. Inhibits tumor cell adhesion and migration in a dose-dependent manner. Abolishes the attachment of human brain microvascular endothelial cells (HBMEC) to fibrinogen (IC(50)=0.12 uM) and dramatically reduces its adhesion to fibronectin (IC(50)=0.12 uM), whereas no effect is observed on type I collagen, vitronectin or laminin 1. Also blocks the cell migration toward fibronectin and fibrinogen. These effects are not dependent of the catalytic activity, but are mediated by alpha-5/beta-1 (ITGA5/ITGB1) and alpha-v-containing (ITGAV) integrins. Also shows anti-angiogenic activity in chicken chorioallantoix membrane assay. Has a relatively high enzymatic activity. PLA2 catalyzes the calcium-dependent hydrolysis of the 2-acyl groups in 3-sn-phosphoglycerides. The chain is Acidic phospholipase A2 CC-PLA2-1 from Cerastes cerastes (Horned desert viper).